The primary structure comprises 153 residues: Neuromedin-S (153 aa).

Positions 1-26 (MKHLRPQFPLILAIYCFCMLQIPSSG) are cleaved as a signal peptide. Propeptides lie at residues 27–69 (FPQP…IYKR), 70–105 (FLFH…ANRR), and 106–108 (MKR). N141 is subject to Asparagine amide. The propeptide occupies 144–153 (NIEDEAQIQW).

It belongs to the NmU family.

The protein resides in the secreted. In terms of biological role, implicated in the regulation of circadian rhythms through autocrine and/or paracrine actions. The protein is Neuromedin-S (NMS) of Homo sapiens (Human).